The chain runs to 311 residues: Syndecan-1 (311 aa).

The signal sequence occupies residues 1-22 (MRRAALWLWLCALALRLQPALP). The Extracellular segment spans residues 23 to 255 (QIVAVNVPPE…SLLDRKEVLG (233 aa)). Disordered regions lie at residues 29–59 (VPPE…LSRQ) and 152–184 (SHPH…VEGG). Positions 32-42 (EDQDGSGDDSD) are enriched in acidic residues. Residue serine 37 is glycosylated (O-linked (Xyl...) (chondroitin sulfate) serine). Asparagine 43 carries an N-linked (GlcNAc...) asparagine glycan. Serine 45 and serine 47 each carry an O-linked (Xyl...) (heparan sulfate) serine glycan. O-linked (Xyl...) (chondroitin sulfate) serine glycans are attached at residues serine 207 and serine 217. The chain crosses the membrane as a helical span at residues 256–276 (GVIAGGLVGLIFAVCLVAFML). Residues 277–311 (YRMKKKDEGSYSLEEPKQANGGAYQKPTKQEEFYA) are Cytoplasmic-facing. The disordered stretch occupies residues 285-311 (GSYSLEEPKQANGGAYQKPTKQEEFYA). Phosphoserine is present on serine 286.

This sequence belongs to the syndecan proteoglycan family. Interacts with CDCP1. Interacts (via C-terminus) with TIAM1 (via PDZ domain). Interacts with MDK. Post-translationally, shedding is enhanced by a number of factors such as heparanase, thrombin or EGF. Also by stress and wound healing. PMA-mediated shedding is inhibited by TIMP3.

Its subcellular location is the membrane. It is found in the secreted. It localises to the extracellular exosome. In terms of biological role, cell surface proteoglycan that contains both heparan sulfate and chondroitin sulfate and that links the cytoskeleton to the interstitial matrix. Regulates exosome biogenesis in concert with SDCBP and PDCD6IP. Able to induce its own expression in dental mesenchymal cells and also in the neighboring dental epithelial cells via an MSX1-mediated pathway. The sequence is that of Syndecan-1 from Mus musculus (Mouse).